The chain runs to 246 residues: 5'-nucleotidase SurE (246 aa).

A divalent metal cation-binding residues include Asp8, Asp9, Ser39, and Asn91.

It belongs to the SurE nucleotidase family. Requires a divalent metal cation as cofactor.

The protein localises to the cytoplasm. It catalyses the reaction a ribonucleoside 5'-phosphate + H2O = a ribonucleoside + phosphate. Its function is as follows. Nucleotidase that shows phosphatase activity on nucleoside 5'-monophosphates. This chain is 5'-nucleotidase SurE, found in Actinobacillus succinogenes (strain ATCC 55618 / DSM 22257 / CCUG 43843 / 130Z).